A 148-amino-acid chain; its full sequence is Nucleoside diphosphate kinase B (148 aa).

6 residues coordinate ATP: lysine 9, phenylalanine 57, arginine 85, threonine 91, arginine 102, and asparagine 112. The active-site Pros-phosphohistidine intermediate is histidine 115.

This sequence belongs to the NDK family. Mg(2+) serves as cofactor.

The enzyme catalyses a 2'-deoxyribonucleoside 5'-diphosphate + ATP = a 2'-deoxyribonucleoside 5'-triphosphate + ADP. It catalyses the reaction a ribonucleoside 5'-diphosphate + ATP = a ribonucleoside 5'-triphosphate + ADP. In terms of biological role, major role in the synthesis of nucleoside triphosphates other than ATP. The ATP gamma phosphate is transferred to the NDP beta phosphate via a ping-pong mechanism, using a phosphorylated active-site intermediate. The sequence is that of Nucleoside diphosphate kinase B from Flaveria bidentis (Coastal plain yellowtops).